A 313-amino-acid chain; its full sequence is Acetaldehyde dehydrogenase 3 (313 aa).

11-14 (SGNI) is a binding site for NAD(+). Cys129 acts as the Acyl-thioester intermediate in catalysis. Residues 160 to 168 (SAGPGTRAN) and Asn288 contribute to the NAD(+) site.

The protein belongs to the acetaldehyde dehydrogenase family.

The catalysed reaction is acetaldehyde + NAD(+) + CoA = acetyl-CoA + NADH + H(+). The polypeptide is Acetaldehyde dehydrogenase 3 (Rhizorhabdus wittichii (strain DSM 6014 / CCUG 31198 / JCM 15750 / NBRC 105917 / EY 4224 / RW1) (Sphingomonas wittichii)).